Here is a 90-residue protein sequence, read N- to C-terminus: Elongation factor 1-beta (90 aa).

This sequence belongs to the EF-1-beta/EF-1-delta family.

In terms of biological role, promotes the exchange of GDP for GTP in EF-1-alpha/GDP, thus allowing the regeneration of EF-1-alpha/GTP that could then be used to form the ternary complex EF-1-alpha/GTP/AAtRNA. The protein is Elongation factor 1-beta of Sulfolobus acidocaldarius (strain ATCC 33909 / DSM 639 / JCM 8929 / NBRC 15157 / NCIMB 11770).